The primary structure comprises 344 residues: UDP-galactose/UDP-glucose transporter 5B (344 aa).

The next 8 membrane-spanning stretches (helical) occupy residues 16-36, 56-76, 115-135, 142-162, 176-196, 220-240, 246-266, and 292-312; these read LWKGVFAVSGIMSTLVIYGVL, LFLVFCNRLTTSAVSAGALLA, VQTLAKCAKMIPVMVWGTLIM, FDYLVAFLVTLGCSVFILFPA, TVWGVSLMAGYLGFDGFTSTF, CVLSFTGLILQGHLLPAVDFV, CLLDIALLSTVATASQFFISY, and CIWFSHPLSWEQCIGSVIVFG. Residues 324-344 are disordered; that stretch reads KNSQTQPPPPELPQYEKVESS.

The protein belongs to the nucleotide-sugar transporter family. UDP-galactose:UMP antiporter (TC 2.A.7.11) subfamily.

Its subcellular location is the membrane. Its function is as follows. Sugar transporter involved in the transport of nucleotide-sugars from cytoplasm into the Golgi and/or the endoplasmic reticulum. The protein is UDP-galactose/UDP-glucose transporter 5B of Arabidopsis thaliana (Mouse-ear cress).